Consider the following 356-residue polypeptide: Protein translocase subunit SecY (356 aa).

The next 8 membrane-spanning stretches (helical) occupy residues 24-44 (LFVI…IPGI), 77-97 (IFAL…LLTV), 125-145 (LVLA…MPGM), 154-174 (FAFY…LMWL), 183-203 (IGNG…PPAV), 217-237 (FLLL…VVFI), 274-294 (VIPA…ASWF), and 317-337 (YVLL…ALVF).

This sequence belongs to the SecY/SEC61-alpha family. Component of the Sec protein translocase complex. Heterotrimer consisting of SecY, SecE and SecG subunits. The heterotrimers can form oligomers, although 1 heterotrimer is thought to be able to translocate proteins. Interacts with the ribosome. Interacts with SecDF, and other proteins may be involved. Interacts with SecA.

It localises to the cell membrane. The central subunit of the protein translocation channel SecYEG. Consists of two halves formed by TMs 1-5 and 6-10. These two domains form a lateral gate at the front which open onto the bilayer between TMs 2 and 7, and are clamped together by SecE at the back. The channel is closed by both a pore ring composed of hydrophobic SecY resides and a short helix (helix 2A) on the extracellular side of the membrane which forms a plug. The plug probably moves laterally to allow the channel to open. The ring and the pore may move independently. The protein is Protein translocase subunit SecY of Buchnera aphidicola subsp. Acyrthosiphon kondoi (Acyrthosiphon kondoi symbiotic bacterium).